The primary structure comprises 500 residues: Perfringolysin O (500 aa).

Positions 1–28 (MIRFKKTKLIASIAMALCLFSQPVISFS) are cleaved as a signal peptide. The next 4 membrane-spanning stretches (beta stranded) occupy residues 189 to 202 (KSQI…NAKV), 209 to 218 (VDFNAVANNE), 287 to 296 (SKDVQAAFKA), and 304 to 316 (KNSQ…YENS). The Conserved undecapeptide motif lies at 458–468 (ECTGLAWEWWR). The Cholesterol binding signature appears at 490–491 (TL).

Belongs to the cholesterol-dependent cytolysin family. Homooligomeric pore complex of 35 to 50 subunits; when inserted in the host membrane.

It localises to the secreted. The protein resides in the host cell membrane. Functionally, a cholesterol-dependent toxin that causes cytolysis by forming pores in cholesterol containing host membranes. After binding to target membranes, the protein assembles into a pre-pore complex. A conformation change leads to insertion in the host membrane and formation of an oligomeric pore complex. Cholesterol is required for binding to host cell membranes, membrane insertion and pore formation; cholesterol binding is mediated by a Thr-Leu pair in the C-terminus. Can be reversibly inactivated by oxidation. This Clostridium perfringens (strain ATCC 13124 / DSM 756 / JCM 1290 / NCIMB 6125 / NCTC 8237 / Type A) protein is Perfringolysin O (pfo).